The chain runs to 165 residues: Ribosomal RNA large subunit methyltransferase H (165 aa).

G109 lines the S-adenosyl-L-methionine pocket.

The protein belongs to the RNA methyltransferase RlmH family. In terms of assembly, homodimer.

Its subcellular location is the cytoplasm. The catalysed reaction is pseudouridine(1915) in 23S rRNA + S-adenosyl-L-methionine = N(3)-methylpseudouridine(1915) in 23S rRNA + S-adenosyl-L-homocysteine + H(+). Its function is as follows. Specifically methylates the pseudouridine at position 1915 (m3Psi1915) in 23S rRNA. This chain is Ribosomal RNA large subunit methyltransferase H, found in Methylorubrum extorquens (strain CM4 / NCIMB 13688) (Methylobacterium extorquens).